Reading from the N-terminus, the 226-residue chain is MPPHFLDGQPHGHTDRPRRVRQPGEPLRIGVGGPVGSGKTALVAALCRQLRDELSLAVLTNDIYTTEDADFLRRHAVLPDDRIAAVQTGGCPHTAIRDDITANLDAIDDLIAGHDDLDLILVESGGDNLTATFSSGLVDVQIFVIDVAGGDKVPRKGGPGVTFSDLLVVNKTDLAPLVGADLEVMRRDAAAVRGDRPFELISLAVDPAATPVLSWVREQLRVAQAV.

The tract at residues 1–26 (MPPHFLDGQPHGHTDRPRRVRQPGEP) is disordered. 33-40 (GPVGSGKT) is a GTP binding site.

Belongs to the SIMIBI class G3E GTPase family. UreG subfamily. As to quaternary structure, homodimer. UreD, UreF and UreG form a complex that acts as a GTP-hydrolysis-dependent molecular chaperone, activating the urease apoprotein by helping to assemble the nickel containing metallocenter of UreC. The UreE protein probably delivers the nickel.

Its subcellular location is the cytoplasm. In terms of biological role, facilitates the functional incorporation of the urease nickel metallocenter. This process requires GTP hydrolysis, probably effectuated by UreG. This is Urease accessory protein UreG from Mycolicibacterium vanbaalenii (strain DSM 7251 / JCM 13017 / BCRC 16820 / KCTC 9966 / NRRL B-24157 / PYR-1) (Mycobacterium vanbaalenii).